The primary structure comprises 265 residues: 2-C-methyl-D-erythritol 4-phosphate cytidylyltransferase (265 aa).

Over residues 231–241 (DRGGASREAER) the composition is skewed to basic and acidic residues. The interval 231 to 265 (DRGGASREAERSAMPSAATSVFSGARSAASGSEEV) is disordered. Low complexity predominate over residues 253–265 (SGARSAASGSEEV).

Belongs to the IspD/TarI cytidylyltransferase family. IspD subfamily.

The enzyme catalyses 2-C-methyl-D-erythritol 4-phosphate + CTP + H(+) = 4-CDP-2-C-methyl-D-erythritol + diphosphate. It participates in isoprenoid biosynthesis; isopentenyl diphosphate biosynthesis via DXP pathway; isopentenyl diphosphate from 1-deoxy-D-xylulose 5-phosphate: step 2/6. Functionally, catalyzes the formation of 4-diphosphocytidyl-2-C-methyl-D-erythritol from CTP and 2-C-methyl-D-erythritol 4-phosphate (MEP). This Xanthomonas campestris pv. campestris (strain B100) protein is 2-C-methyl-D-erythritol 4-phosphate cytidylyltransferase.